The primary structure comprises 260 residues: Flagellar basal-body rod protein FlgG (260 aa).

It belongs to the flagella basal body rod proteins family. The basal body constitutes a major portion of the flagellar organelle and consists of four rings (L,P,S, and M) mounted on a central rod. The rod consists of about 26 subunits of FlgG in the distal portion, and FlgB, FlgC and FlgF are thought to build up the proximal portion of the rod with about 6 subunits each.

Its subcellular location is the bacterial flagellum basal body. This Salmonella typhi protein is Flagellar basal-body rod protein FlgG (flgG).